A 458-amino-acid polypeptide reads, in one-letter code: Retinoic acid receptor alpha (458 aa).

Positions 1–86 (MASNGGSCPS…PPPLPRIYKP (86 aa)) are modulating. Residues 54–68 (TPSPATIETQSTSSE) are compositionally biased toward polar residues. Residues 54 to 76 (TPSPATIETQSTSSEEIVPSPPS) form a disordered region. NR C4-type zinc fingers lie at residues 87 to 107 (CFVC…CEGC) and 123 to 147 (CHRD…LQKC). Residues 87-152 (CFVCQDKSSG…RLQKCFEVGM (66 aa)) constitute a DNA-binding region (nuclear receptor). Residues 153 to 182 (SKESVRNDRNKKKKQEAPKQECTESYIITP) form a hinge region. Positions 183–417 (EVEDLVEKVR…PLIQEMLENS (235 aa)) constitute an NR LBD domain. Positions 408-416 (PLIQEMLEN) match the 9aaTAD motif. The tract at residues 417 to 458 (SEGLDSLTGQPPRASSLAPPPGSCSPSLSPSSNRSSPTSHSP) is disordered. Residues 440–458 (CSPSLSPSSNRSSPTSHSP) are compositionally biased toward low complexity.

It belongs to the nuclear hormone receptor family. NR1 subfamily. In terms of assembly, heterodimer; with an rxr molecule. Binds DNA preferentially as a rar/rxr heterodimer. In terms of tissue distribution, expressed in forelimb, in the distal forelimb blastema, kidney, liver and hindlimb blastemal mesenchymal cells.

The protein resides in the nucleus. Its function is as follows. Receptor for retinoic acid. Retinoic acid receptors bind as heterodimers to their target response elements in response to their ligands, all-trans or 9-cis retinoic acid, and regulate gene expression in various biological processes. The rar/rxr heterodimers bind to the retinoic acid response elements (RARE) composed of tandem 5'-AGGTCA-3' sites known as DR1-DR5. Retinoic acid signaling appears to be involved in specifying proximal-distal axis in limb regeneration. The sequence is that of Retinoic acid receptor alpha (RARA) from Notophthalmus viridescens (Eastern newt).